The following is a 182-amino-acid chain: Oligoribonuclease (182 aa).

Residues 8–171 form the Exonuclease domain; it reads LIWIDLEMTG…DDIRESIKEL (164 aa). The active site involves Tyr129.

Belongs to the oligoribonuclease family.

It localises to the cytoplasm. Functionally, 3'-to-5' exoribonuclease specific for small oligoribonucleotides. The chain is Oligoribonuclease from Haemophilus influenzae (strain PittGG).